Consider the following 837-residue polypeptide: Protein translocase subunit SecA (837 aa).

ATP-binding positions include Gln-87, 105–109 (GEGKT), and Asp-494. The disordered stretch occupies residues 788 to 837 (HKESKSDLEYSDSENTETKKKPKRRSEPKVGRNDPCPCGSGKKYKKCCGK). Zn(2+)-binding residues include Cys-823, Cys-825, Cys-834, and Cys-835.

This sequence belongs to the SecA family. As to quaternary structure, monomer and homodimer. Part of the essential Sec protein translocation apparatus which comprises SecA, SecYEG and auxiliary proteins SecDF-YajC and YidC. Requires Zn(2+) as cofactor.

It is found in the cell inner membrane. It localises to the cytoplasm. It carries out the reaction ATP + H2O + cellular proteinSide 1 = ADP + phosphate + cellular proteinSide 2.. In terms of biological role, part of the Sec protein translocase complex. Interacts with the SecYEG preprotein conducting channel. Has a central role in coupling the hydrolysis of ATP to the transfer of proteins into and across the cell membrane, serving as an ATP-driven molecular motor driving the stepwise translocation of polypeptide chains across the membrane. The polypeptide is Protein translocase subunit SecA (Maridesulfovibrio salexigens (strain ATCC 14822 / DSM 2638 / NCIMB 8403 / VKM B-1763) (Desulfovibrio salexigens)).